Consider the following 229-residue polypeptide: 7-cyano-7-deazaguanine synthase (229 aa).

9 to 19 (YSGGLDSTTCM) is an ATP binding site. Cys189, Cys199, Cys202, and Cys205 together coordinate Zn(2+).

This sequence belongs to the QueC family. The cofactor is Zn(2+).

It carries out the reaction 7-carboxy-7-deazaguanine + NH4(+) + ATP = 7-cyano-7-deazaguanine + ADP + phosphate + H2O + H(+). It participates in purine metabolism; 7-cyano-7-deazaguanine biosynthesis. Catalyzes the ATP-dependent conversion of 7-carboxy-7-deazaguanine (CDG) to 7-cyano-7-deazaguanine (preQ(0)). The sequence is that of 7-cyano-7-deazaguanine synthase from Geotalea daltonii (strain DSM 22248 / JCM 15807 / FRC-32) (Geobacter daltonii).